The following is a 186-amino-acid chain: Riboflavin kinase (186 aa).

Residues threonine 42 and asparagine 44 each coordinate Mg(2+). Glutamate 123 acts as the Nucleophile in catalysis.

This sequence belongs to the flavokinase family. Requires Zn(2+) as cofactor. It depends on Mg(2+) as a cofactor.

It carries out the reaction riboflavin + ATP = FMN + ADP + H(+). Its pathway is cofactor biosynthesis; FMN biosynthesis; FMN from riboflavin (ATP route): step 1/1. In terms of biological role, catalyzes the phosphorylation of riboflavin (vitamin B2) to form flavin mononucleotide (FMN) coenzyme. The chain is Riboflavin kinase (FMN1) from Eremothecium gossypii (strain ATCC 10895 / CBS 109.51 / FGSC 9923 / NRRL Y-1056) (Yeast).